Reading from the N-terminus, the 279-residue chain is Thymidylate synthase (279 aa).

133-134 provides a ligand contact to dUMP; that stretch reads RR. C154 functions as the Nucleophile in the catalytic mechanism. Residues 178–181, N189, and 219–221 contribute to the dUMP site; these read RSND and HIY. D181 contributes to the (6R)-5,10-methylene-5,6,7,8-tetrahydrofolate binding site. Position 278 (A278) interacts with (6R)-5,10-methylene-5,6,7,8-tetrahydrofolate.

Belongs to the thymidylate synthase family. Bacterial-type ThyA subfamily. As to quaternary structure, homodimer.

Its subcellular location is the cytoplasm. It catalyses the reaction dUMP + (6R)-5,10-methylene-5,6,7,8-tetrahydrofolate = 7,8-dihydrofolate + dTMP. The protein operates within pyrimidine metabolism; dTTP biosynthesis. Catalyzes the reductive methylation of 2'-deoxyuridine-5'-monophosphate (dUMP) to 2'-deoxythymidine-5'-monophosphate (dTMP) while utilizing 5,10-methylenetetrahydrofolate (mTHF) as the methyl donor and reductant in the reaction, yielding dihydrofolate (DHF) as a by-product. This enzymatic reaction provides an intracellular de novo source of dTMP, an essential precursor for DNA biosynthesis. This is Thymidylate synthase from Streptococcus pyogenes serotype M3 (strain SSI-1).